Consider the following 96-residue polypeptide: CRISPR-associated endoribonuclease Cas2 (96 aa).

Residue Asp8 participates in Mg(2+) binding.

This sequence belongs to the CRISPR-associated endoribonuclease Cas2 protein family. Homodimer, forms a heterotetramer with a Cas1 homodimer. Mg(2+) is required as a cofactor.

In terms of biological role, CRISPR (clustered regularly interspaced short palindromic repeat), is an adaptive immune system that provides protection against mobile genetic elements (viruses, transposable elements and conjugative plasmids). CRISPR clusters contain sequences complementary to antecedent mobile elements and target invading nucleic acids. CRISPR clusters are transcribed and processed into CRISPR RNA (crRNA). Functions as a ssRNA-specific endoribonuclease. Involved in the integration of spacer DNA into the CRISPR cassette. The chain is CRISPR-associated endoribonuclease Cas2 from Chlorobaculum tepidum (strain ATCC 49652 / DSM 12025 / NBRC 103806 / TLS) (Chlorobium tepidum).